The sequence spans 594 residues: Probable Xaa-Pro aminopeptidase P (594 aa).

Residues Asp391, Asp402, Glu500, and Glu514 each contribute to the Mn(2+) site.

This sequence belongs to the peptidase M24B family. Mn(2+) is required as a cofactor.

The catalysed reaction is Release of any N-terminal amino acid, including proline, that is linked to proline, even from a dipeptide or tripeptide.. Its function is as follows. Catalyzes the removal of a penultimate prolyl residue from the N-termini of peptides. The chain is Probable Xaa-Pro aminopeptidase P (ampp) from Pyrenophora tritici-repentis (strain Pt-1C-BFP) (Wheat tan spot fungus).